Reading from the N-terminus, the 314-residue chain is R2-like ligand binding oxidase (314 aa).

Residues glutamate 68, glutamate 101, and histidine 104 each contribute to the Mn(2+) site. The 3-(O4'-tyrosyl)-valine (Val-Tyr) cross-link spans 71–162; that stretch reads VTEDIQPFMS…AAQVRASVTY (92 aa). Glutamate 101 provides a ligand contact to Fe cation. Positions 167, 202, and 205 each coordinate Fe cation.

It belongs to the ribonucleoside diphosphate reductase small chain family. R2-like ligand binding oxidase subfamily. Homodimer. The cofactor is Fe cation. Requires Mn(2+) as cofactor.

Its function is as follows. Probable oxidase that might be involved in lipid metabolism. The chain is R2-like ligand binding oxidase from Mycobacterium tuberculosis (strain ATCC 25177 / H37Ra).